A 267-amino-acid polypeptide reads, in one-letter code: Thiamine thiazole synthase (267 aa).

NAD(+)-binding positions include serine 47, 66-67 (ER), glycine 74, valine 138, and 164-166 (HID). Aspartate 166 and histidine 181 together coordinate Fe cation. Positions 184 and 230 each coordinate NAD(+). Arginine 240 serves as a coordination point for glycine.

This sequence belongs to the THI4 family. Homooctamer; tetramer of dimers. Requires Fe(2+) as cofactor.

It catalyses the reaction hydrogen sulfide + glycine + NAD(+) = ADP-5-ethyl-4-methylthiazole-2-carboxylate + nicotinamide + 3 H2O + H(+). The protein operates within cofactor biosynthesis; thiamine diphosphate biosynthesis. Functionally, involved in the biosynthesis of the thiazole moiety of thiamine. Catalyzes the conversion of NAD and glycine to adenosine diphosphate 5-(2-hydroxyethyl)-4-methylthiazole-2-carboxylate (ADT), an adenylated thiazole intermediate, using free sulfide as a source of sulfur. This chain is Thiamine thiazole synthase, found in Methanocaldococcus jannaschii (strain ATCC 43067 / DSM 2661 / JAL-1 / JCM 10045 / NBRC 100440) (Methanococcus jannaschii).